The chain runs to 240 residues: MEVLIHKSVYYKIFDKTFNNSSHRYIQENHSINEAEILANIESITNYFKAQDILILNQVHSNQIVNADEHIVTIPEADGSITTKKNLVLTVQSADCVPVLLASDDGKIIGVAHAGWQGSINNIISNIVTKMIEKGAKNLIAVIGPAIAQSSYEVDDKYYKTFLSKDINNKRFFINSIKENHYMFDLPAFVELKLNESGVKDIKNITEDTYTNPSKYPSKRRSYHMQVPYNEKILSAIVIK.

Histidine 60, cysteine 96, and histidine 113 together coordinate Zn(2+).

This sequence belongs to the purine nucleoside phosphorylase YfiH/LACC1 family. In terms of assembly, homodimer. Cu(2+) is required as a cofactor. It depends on Zn(2+) as a cofactor.

The enzyme catalyses adenosine + phosphate = alpha-D-ribose 1-phosphate + adenine. It catalyses the reaction S-methyl-5'-thioadenosine + phosphate = 5-(methylsulfanyl)-alpha-D-ribose 1-phosphate + adenine. It carries out the reaction inosine + phosphate = alpha-D-ribose 1-phosphate + hypoxanthine. The catalysed reaction is adenosine + H2O + H(+) = inosine + NH4(+). Purine nucleoside enzyme that catalyzes the phosphorolysis of adenosine and inosine nucleosides, yielding D-ribose 1-phosphate and the respective free bases, adenine and hypoxanthine. Also catalyzes the phosphorolysis of S-methyl-5'-thioadenosine into adenine and S-methyl-5-thio-alpha-D-ribose 1-phosphate. Also has adenosine deaminase activity. The sequence is that of Purine nucleoside phosphorylase RP494 from Rickettsia prowazekii (strain Madrid E).